Consider the following 101-residue polypeptide: Citrate lyase acyl carrier protein (101 aa).

An O-(phosphoribosyl dephospho-coenzyme A)serine modification is found at serine 14.

This sequence belongs to the CitD family. As to quaternary structure, oligomer with a subunit composition of (alpha,beta,gamma)6.

The protein localises to the cytoplasm. In terms of biological role, covalent carrier of the coenzyme of citrate lyase. This chain is Citrate lyase acyl carrier protein, found in Clostridium perfringens (strain 13 / Type A).